Reading from the N-terminus, the 293-residue chain is Phosphoribosylaminoimidazole-succinocarboxamide synthase (293 aa).

It belongs to the SAICAR synthetase family.

It carries out the reaction 5-amino-1-(5-phospho-D-ribosyl)imidazole-4-carboxylate + L-aspartate + ATP = (2S)-2-[5-amino-1-(5-phospho-beta-D-ribosyl)imidazole-4-carboxamido]succinate + ADP + phosphate + 2 H(+). The protein operates within purine metabolism; IMP biosynthesis via de novo pathway; 5-amino-1-(5-phospho-D-ribosyl)imidazole-4-carboxamide from 5-amino-1-(5-phospho-D-ribosyl)imidazole-4-carboxylate: step 1/2. This is Phosphoribosylaminoimidazole-succinocarboxamide synthase from Desulfosudis oleivorans (strain DSM 6200 / JCM 39069 / Hxd3) (Desulfococcus oleovorans).